The primary structure comprises 91 residues: Cell division topological specificity factor (91 aa).

This sequence belongs to the MinE family.

Prevents the cell division inhibition by proteins MinC and MinD at internal division sites while permitting inhibition at polar sites. This ensures cell division at the proper site by restricting the formation of a division septum at the midpoint of the long axis of the cell. This chain is Cell division topological specificity factor, found in Desulfitobacterium hafniense (strain DSM 10664 / DCB-2).